Reading from the N-terminus, the 450-residue chain is tRNA-2-methylthio-N(6)-dimethylallyladenosine synthase (450 aa).

One can recognise an MTTase N-terminal domain in the interval 14-132 (GEFFIETWGC…FPNYLNEVKK (119 aa)). Cys23, Cys59, Cys93, Cys169, Cys173, and Cys176 together coordinate [4Fe-4S] cluster. Positions 155 to 385 (RKNSMKAFVT…VEVVNEISAK (231 aa)) constitute a Radical SAM core domain. Residues 388 to 450 (KAYEGKIEEV…NSFSLTGEEI (63 aa)) enclose the TRAM domain.

This sequence belongs to the methylthiotransferase family. MiaB subfamily. As to quaternary structure, monomer. It depends on [4Fe-4S] cluster as a cofactor.

The protein localises to the cytoplasm. It catalyses the reaction N(6)-dimethylallyladenosine(37) in tRNA + (sulfur carrier)-SH + AH2 + 2 S-adenosyl-L-methionine = 2-methylsulfanyl-N(6)-dimethylallyladenosine(37) in tRNA + (sulfur carrier)-H + 5'-deoxyadenosine + L-methionine + A + S-adenosyl-L-homocysteine + 2 H(+). Catalyzes the methylthiolation of N6-(dimethylallyl)adenosine (i(6)A), leading to the formation of 2-methylthio-N6-(dimethylallyl)adenosine (ms(2)i(6)A) at position 37 in tRNAs that read codons beginning with uridine. This is tRNA-2-methylthio-N(6)-dimethylallyladenosine synthase from Clostridium botulinum (strain Loch Maree / Type A3).